The chain runs to 116 residues: Mercuric transport protein MerT (116 aa).

The next 2 membrane-spanning stretches (helical) occupy residues L16–F36 and V46–W66. Hg(2+) contacts are provided by C24 and C25. The Hg(2+) site is built by C76 and C82. A helical transmembrane segment spans residues I94–F114.

It belongs to the MerT family.

The protein localises to the cell inner membrane. Involved in mercury resistance. Probably transfers a mercuric ion from the periplasmic Hg(2+)-binding protein MerP to the cytoplasmic mercuric reductase MerA. This Serratia marcescens protein is Mercuric transport protein MerT.